The sequence spans 333 residues: Potassium channel protein 1 (333 aa).

Over 1–6 (METYEK) the chain is Cytoplasmic. A helical membrane pass occupies residues 7 to 27 (IELGIIVIILLILIESVILMT). Over 28–60 (VEGWDFFTAFYTAVVTISTVGYGDYTPQTFLGK) the chain is Extracellular. Residues 46–51 (TVGYGD) carry the Selectivity filter motif. The helical transmembrane segment at 61–81 (LSVIIYIFAGVGAVAYTMGNI) threads the bilayer. Residues 82 to 333 (ASFFIEGHFR…KLKRYVEGVE (252 aa)) lie on the Cytoplasmic side of the membrane. Residues 107–229 (NNHYIICGYG…GADRAVCPYI (123 aa)) enclose the RCK N-terminal domain. The RCK C-terminal domain maps to 246-331 (EFIHSLVATE…LEKLKRYVEG (86 aa)).

As to quaternary structure, homotetramer.

It localises to the cell membrane. Functionally, potassium channel protein. Seems to conduct potassium at low membrane potentials. The polypeptide is Potassium channel protein 1 (Methanocaldococcus jannaschii (strain ATCC 43067 / DSM 2661 / JAL-1 / JCM 10045 / NBRC 100440) (Methanococcus jannaschii)).